An 872-amino-acid polypeptide reads, in one-letter code: TATA box-binding protein-associated factor RNA polymerase I subunit B (872 aa).

The segment at 6–40 adopts an RRN7-type zinc-finger fold; sequence ETMQLENMHCDVCEGTTFQEREGFYYCVECGTQKD. Residues cysteine 15, cysteine 18, cysteine 32, and cysteine 35 each contribute to the Zn(2+) site. The tract at residues 41-72 is B-reader; the sequence is QIRAVDITAEDNFDDTAAGRYTARTIRQKKDT. Positions 73 to 84 are B-linker; it reads EKEDEDDITSWE. The N-terminal cyclin fold stretch occupies residues 85-312; that stretch reads FYNYVLRGFL…LPGNVAAKGK (228 aa). The disordered stretch occupies residues 187-206; that stretch reads DASGYRSHGGASESEGEQSL.

The protein belongs to the RRN7/TAF1B family.

The protein localises to the nucleus. Its subcellular location is the nucleolus. Functionally, component of RNA polymerase I core factor complex that acts as a GTF2B/TFIIB-like factor and plays a key role in multiple steps during transcription initiation such as pre-initiation complex (PIC) assembly and postpolymerase recruitment events in polymerase I (Pol I) transcription. Binds rDNA promoters and plays a role in Pol I recruitment. The chain is TATA box-binding protein-associated factor RNA polymerase I subunit B from Drosophila melanogaster (Fruit fly).